The primary structure comprises 361 residues: Protein phosphatase 1 regulatory subunit 7 (361 aa).

A disordered region spans residues 1–64; the sequence is MAAERGAGQQ…RGAEDPEEEH (64 aa). Ala-2 is modified (N-acetylalanine). Phosphoserine is present on residues Ser-12, Ser-24, Ser-27, Ser-45, and Ser-48. A compositionally biased stretch (basic and acidic residues) spans 17–34; sequence EVDRRVESEESGDEEGKK. Residues 48–58 show a composition bias toward basic and acidic residues; that stretch reads SLKDGVDRGAE. LRR repeat units follow at residues 78-99, 100-121, 122-143, 144-165, 166-187, 188-209, 210-231, 232-253, 254-275, 276-297, and 298-319; these read DAED…EVLK, KVKS…EELQ, SLRE…EALT, ELEV…DKLT, QLKK…SNLH, QLQM…DTLT, NLES…DALT, NLTV…QSLV, NLRE…ENNN, KLTM…SHLT, and ELQE…DELK. Position 323 is a phosphoserine (Ser-323). The region spanning 332–361 is the LRRCT domain; it reads NPLQKDPQYRRKVMLALPSVRQIDATYVRF.

This sequence belongs to the SDS22 family. Interacts with PPP1CA, PPP1CB and PPP1CC/PPP1G. As to expression, widely expressed with high level in testis. Expression increases during puberty. Expressed in spermatids and probably also in spermatozoa.

It is found in the nucleus. Its function is as follows. Regulatory subunit of protein phosphatase 1. In Mus musculus (Mouse), this protein is Protein phosphatase 1 regulatory subunit 7 (Ppp1r7).